We begin with the raw amino-acid sequence, 279 residues long: Presqualene diphosphate synthase (279 aa).

It belongs to the phytoene/squalene synthase family. HpnD subfamily.

The catalysed reaction is 2 (2E,6E)-farnesyl diphosphate = presqualene diphosphate + diphosphate. It functions in the pathway secondary metabolite biosynthesis; hopanoid biosynthesis. In terms of biological role, involved in the biosynthesis of the hopanoid precursor squalene (SQ) from farnesyl diphosphate (FPP). Catalyzes the first step, the formation of presqualene diphosphate (PSPP) from two molecules of FPP. The polypeptide is Presqualene diphosphate synthase (Rhodopseudomonas palustris (strain ATCC BAA-98 / CGA009)).